Reading from the N-terminus, the 211-residue chain is Large ribosomal subunit protein eL13 (211 aa).

Lys16 is subject to N6-acetyllysine. A phosphoserine mark is found at Ser77 and Ser106. Residues Lys123 and Lys145 each participate in a glycyl lysine isopeptide (Lys-Gly) (interchain with G-Cter in SUMO2) cross-link. Residue Lys174 forms a Glycyl lysine isopeptide (Lys-Gly) (interchain with G-Cter in SUMO1); alternate linkage. Glycyl lysine isopeptide (Lys-Gly) (interchain with G-Cter in SUMO2); alternate cross-links involve residues Lys174 and Lys177. Position 177 is an N6-acetyllysine; alternate (Lys177).

It belongs to the eukaryotic ribosomal protein eL13 family. As to quaternary structure, component of the 60S large ribosomal subunit (LSU).

The protein resides in the cytoplasm. Its function is as follows. Component of the ribosome, a large ribonucleoprotein complex responsible for the synthesis of proteins in the cell. The small ribosomal subunit (SSU) binds messenger RNAs (mRNAs) and translates the encoded message by selecting cognate aminoacyl-transfer RNA (tRNA) molecules. The large subunit (LSU) contains the ribosomal catalytic site termed the peptidyl transferase center (PTC), which catalyzes the formation of peptide bonds, thereby polymerizing the amino acids delivered by tRNAs into a polypeptide chain. The nascent polypeptides leave the ribosome through a tunnel in the LSU and interact with protein factors that function in enzymatic processing, targeting, and the membrane insertion of nascent chains at the exit of the ribosomal tunnel. As part of the LSU, it is probably required for its formation and the maturation of rRNAs. Plays a role in bone development. In Oryctolagus cuniculus (Rabbit), this protein is Large ribosomal subunit protein eL13 (RPL13).